Here is a 285-residue protein sequence, read N- to C-terminus: Bifunctional protein FolD 2 (285 aa).

NADP(+)-binding positions include Gly164–Ser166, Ser189, and Val230.

It belongs to the tetrahydrofolate dehydrogenase/cyclohydrolase family. In terms of assembly, homodimer.

The enzyme catalyses (6R)-5,10-methylene-5,6,7,8-tetrahydrofolate + NADP(+) = (6R)-5,10-methenyltetrahydrofolate + NADPH. It carries out the reaction (6R)-5,10-methenyltetrahydrofolate + H2O = (6R)-10-formyltetrahydrofolate + H(+). It functions in the pathway one-carbon metabolism; tetrahydrofolate interconversion. In terms of biological role, catalyzes the oxidation of 5,10-methylenetetrahydrofolate to 5,10-methenyltetrahydrofolate and then the hydrolysis of 5,10-methenyltetrahydrofolate to 10-formyltetrahydrofolate. The chain is Bifunctional protein FolD 2 from Geobacter metallireducens (strain ATCC 53774 / DSM 7210 / GS-15).